Reading from the N-terminus, the 592-residue chain is Laccase PFICI_06862 (592 aa).

Positions 1 to 19 (MYIQTQFASLLLLAGTSLA) are cleaved as a signal peptide. Asn26 carries an N-linked (GlcNAc...) asparagine glycan. Plastocyanin-like domains are found at residues 32–142 (QWSS…WIAP) and 173–350 (VVIS…RYPG). Positions 78, 80, 123, and 125 each coordinate Cu cation. Residues Asn370, Asn407, and Asn454 are each glycosylated (N-linked (GlcNAc...) asparagine). Positions 445–563 (SDVQGGSMQN…AGQQVVLLEG (119 aa)) constitute a Plastocyanin-like 3 domain. His475 is a Cu cation binding site. An N-linked (GlcNAc...) asparagine glycan is attached at Asn524.

It belongs to the multicopper oxidase family.

Its subcellular location is the cell surface. It functions in the pathway pigment biosynthesis; melanin biosynthesis. In terms of biological role, laccase involved the biosynthesis of dihydroxynaphthalene (DHN)-melanin, a bluish-green pigment forming a dark layer in the conidial wall that protects the conidia from UV radiations. The first step of the pathway is the production of the pentaketide 1,3,6,8-tetrahydroxynaphthalene (1,3,6,8-THN or T4HN) by the polyketide synthase PfmaE though condensation of acetyl-CoA with malonyl-CoA. T4HN is not stable and easily oxidizes into the stable form flaviolin. T4HN is also substrate of the hydroxynaphthalene reductase PfmaG to yield scytalone. The scytalone dehydratase PfmaJ then reduces scytalone to 1,3,8-THN. 1,3,8-THN is then substrate of the hydroxynaphthalene reductase PfmaI to yield vermelone. Vermelone is further converted by the multicopper oxidase PfmaD to 1,8-DHN. Finally the laccase PFICI_06862 transforms 1,8-DHN to DHN-melanin. The roles of the 5-oxoprolinase PfmaA and the proline iminopeptidase PfmaB within the cluster have not been elucidated yet. The polypeptide is Laccase PFICI_06862 (Pestalotiopsis fici (strain W106-1 / CGMCC3.15140)).